The chain runs to 728 residues: Dynamin-like protein 1 (728 aa).

An assembly domain, required for tetramerization region spans residues 1-119 (MKELFQKIWQ…ILQEKVQSID (119 aa)). In terms of domain architecture, Dynamin-type G spans 159–442 (QNLEFNIAIT…LYAGEKSKIA (284 aa)). The G1 motif stretch occupies residues 169 to 176 (GVMNAGKS). Position 171 to 177 (171 to 177 (MNAGKSS)) interacts with GDP. Residues 195-196 (ET) form a G2 motif region. Positions 298 to 301 (DTPG) are G3 motif. The G4 motif stretch occupies residues 358–361 (TKAD). K359 is a GDP binding site. Residue E388 is a region of interest, G5 motif. 400–402 (SAK) contributes to the GDP binding site. A required for liposome binding but not for tetramerization region spans residues 470-695 (ENKQGVSEEN…LESLEKVLQS (226 aa)).

Belongs to the TRAFAC class dynamin-like GTPase superfamily. Dynamin/Fzo/YdjA family. As to quaternary structure, forms a 2:2 heterotetramer with DLP1. DLP2 forms a central back-to-back dimer flanked on each side by a DLP1 subunit. In the crystal structures the 2 DLP1 subunits are in very different conformations.

It localises to the cytoplasm. It is found in the cytosol. The enzyme catalyses GTP + H2O = GDP + phosphate + H(+). Functionally, the heterotetrameric DLP1(2)-DLP2(2) complex tethers liposomes and may mediate their fusion. Initial binding is probably mediated by DLP1, while DLP2 couples DLP1 subunits and increases the effective reach of the complex up to 45 nm. The role of the nucleotide is unknown. This subunit alone weakly binds to liposomes; GTP, GDP, GMPPCP and GMPPNP do not change heterotetramer binding. Tetramerization is required for GTPase activity, suggesting the GTPase domains (dynamin-type G) from DLP1 and DLP2 must dimerize to reconstitute the GTPase active site. The chain is Dynamin-like protein 1 from Campylobacter jejuni subsp. jejuni serotype O:23/36 (strain 81-176).